Reading from the N-terminus, the 644-residue chain is Sodium/potassium/calcium exchanger 3 (644 aa).

Positions M1 to R44 are cleaved as a signal peptide. The Extracellular segment spans residues E45–Q107. N71 and N86 each carry an N-linked (GlcNAc...) asparagine glycan. The chain crosses the membrane as a helical span at residues G108–C128. Residues D129–T153 are Cytoplasmic-facing. An Alpha-1 repeat occupies V149 to F189. A helical membrane pass occupies residues F154–T174. The Extracellular portion of the chain corresponds to K175–T182. Residues I183–G203 traverse the membrane as a helical segment. Over Q204–S210 the chain is Cytoplasmic. Residues W211 to I231 traverse the membrane as a helical segment. Residues Y232 to E234 are Extracellular-facing. Residues K235–M255 traverse the membrane as a helical segment. Residues K256–T484 are Cytoplasmic-facing. The residue at position 308 (S308) is a Phosphoserine. The interval A405–S442 is disordered. Positions N409 to G433 are enriched in acidic residues. A helical transmembrane segment spans residues L485–L505. The Extracellular portion of the chain corresponds to G506–V510. Residues I511–I531 form a helical membrane-spanning segment. One copy of the Alpha-2 repeat lies at A518 to N549. The Cytoplasmic portion of the chain corresponds to V532–N549. A helical membrane pass occupies residues V550 to Y570. Topologically, residues G571–G580 are extracellular. Residues L581–L601 traverse the membrane as a helical segment. Residues N602–L615 are Cytoplasmic-facing. The chain crosses the membrane as a helical span at residues L616–V636. Residues N637–H644 lie on the Extracellular side of the membrane.

It belongs to the Ca(2+):cation antiporter (CaCA) (TC 2.A.19) family. SLC24A subfamily. Abundant in the brain. Expressed at low levels in the aorta, uterus and intestine.

The protein localises to the cell membrane. The enzyme catalyses Ca(2+)(out) + K(+)(out) + 4 Na(+)(in) = Ca(2+)(in) + K(+)(in) + 4 Na(+)(out). Its function is as follows. Calcium, potassium:sodium antiporter that transports 1 Ca(2+) and 1 K(+) in exchange for 4 Na(+). The chain is Sodium/potassium/calcium exchanger 3 (SLC24A3) from Homo sapiens (Human).